Consider the following 206-residue polypeptide: MSRTLVLVRHGQSEWNLKNLFTGWRDPGLTEQGHAEAKAAGQRLKAAGLKFDIAYTSALSRAQVTCQHILDELGQPGLETIRDQALNERDYGDLSGLNKDDARAKWGEEQVHIWRRSYDVPPPGGESLKDTGARVWPYYLHTIQPHVLREETVLVAAHGNSLRALIMALDGLTPEQILKQELNTGVPIIYRLNADSTVASKEILSA.

Substrate contacts are provided by residues 9 to 16 (RHGQSEWN), 22 to 23 (TG), R61, 88 to 91 (ERDY), K99, 115 to 116 (RR), and 159 to 160 (GN). Catalysis depends on H10, which acts as the Tele-phosphohistidine intermediate. E88 (proton donor/acceptor) is an active-site residue.

The protein belongs to the phosphoglycerate mutase family. BPG-dependent PGAM subfamily. In terms of assembly, homodimer.

The enzyme catalyses (2R)-2-phosphoglycerate = (2R)-3-phosphoglycerate. The protein operates within carbohydrate degradation; glycolysis; pyruvate from D-glyceraldehyde 3-phosphate: step 3/5. Its function is as follows. Catalyzes the interconversion of 2-phosphoglycerate and 3-phosphoglycerate. In Brucella abortus (strain S19), this protein is 2,3-bisphosphoglycerate-dependent phosphoglycerate mutase.